The chain runs to 461 residues: Cysteine--tRNA ligase (461 aa).

Residue cysteine 30 participates in Zn(2+) binding. The 'HIGH' region signature appears at 32–42 (VTIYDLCHIGH). The Zn(2+) site is built by cysteine 211, histidine 236, and glutamate 240. The 'KMSKS' region motif lies at 268-272 (KMSKS). Position 271 (lysine 271) interacts with ATP.

This sequence belongs to the class-I aminoacyl-tRNA synthetase family. As to quaternary structure, monomer. The cofactor is Zn(2+).

The protein resides in the cytoplasm. It carries out the reaction tRNA(Cys) + L-cysteine + ATP = L-cysteinyl-tRNA(Cys) + AMP + diphosphate. The sequence is that of Cysteine--tRNA ligase from Shewanella putrefaciens (strain CN-32 / ATCC BAA-453).